Reading from the N-terminus, the 95-residue chain is Large ribosomal subunit protein bL25 (95 aa).

Belongs to the bacterial ribosomal protein bL25 family. In terms of assembly, part of the 50S ribosomal subunit; part of the 5S rRNA/L5/L18/L25 subcomplex. Contacts the 5S rRNA. Binds to the 5S rRNA independently of L5 and L18.

Its function is as follows. This is one of the proteins that binds to the 5S RNA in the ribosome where it forms part of the central protuberance. In Mannheimia succiniciproducens (strain KCTC 0769BP / MBEL55E), this protein is Large ribosomal subunit protein bL25.